Here is an 84-residue protein sequence, read N- to C-terminus: MKPGIHPDYHPVVFQDASTGTTFLTRSTLTSDRTAVWEDGNTYPLVVVDVTSESHPFWTGAQRVMDTAGRVEKFERRYGVRKRP.

It belongs to the bacterial ribosomal protein bL31 family. Type B subfamily. As to quaternary structure, part of the 50S ribosomal subunit.

In Rhodococcus opacus (strain B4), this protein is Large ribosomal subunit protein bL31B.